The sequence spans 792 residues: Phenylalanine--tRNA ligase beta subunit (792 aa).

The tRNA-binding domain maps to 39–147 (GESLGQVVVA…DDAPVGQALA (109 aa)). The B5 domain occupies 400-475 (PQPARILLRR…RIHGYDRVPT (76 aa)). Mg(2+) is bound by residues aspartate 453, aspartate 459, glutamate 462, and aspartate 463. Residues 698-791 (SRFPSVRRDL…IEREHRARIR (94 aa)) enclose the FDX-ACB domain.

It belongs to the phenylalanyl-tRNA synthetase beta subunit family. Type 1 subfamily. In terms of assembly, tetramer of two alpha and two beta subunits. The cofactor is Mg(2+).

The protein localises to the cytoplasm. It carries out the reaction tRNA(Phe) + L-phenylalanine + ATP = L-phenylalanyl-tRNA(Phe) + AMP + diphosphate + H(+). The polypeptide is Phenylalanine--tRNA ligase beta subunit (Xanthomonas oryzae pv. oryzae (strain MAFF 311018)).